We begin with the raw amino-acid sequence, 204 residues long: N-(5'-phosphoribosyl)anthranilate isomerase (204 aa).

Belongs to the TrpF family.

It carries out the reaction N-(5-phospho-beta-D-ribosyl)anthranilate = 1-(2-carboxyphenylamino)-1-deoxy-D-ribulose 5-phosphate. It functions in the pathway amino-acid biosynthesis; L-tryptophan biosynthesis; L-tryptophan from chorismate: step 3/5. This is N-(5'-phosphoribosyl)anthranilate isomerase from Syntrophomonas wolfei subsp. wolfei (strain DSM 2245B / Goettingen).